Here is a 440-residue protein sequence, read N- to C-terminus: D-serine dehydratase (440 aa).

An N6-(pyridoxal phosphate)lysine modification is found at lysine 116.

Belongs to the serine/threonine dehydratase family. DsdA subfamily. As to quaternary structure, monomer. Requires pyridoxal 5'-phosphate as cofactor.

The enzyme catalyses D-serine = pyruvate + NH4(+). This Salmonella typhi protein is D-serine dehydratase.